The following is a 110-amino-acid chain: UPF0060 membrane protein Haur_1798 (110 aa).

4 consecutive transmembrane segments (helical) span residues 7–27 (VVLF…VWQW), 33–53 (SIWF…LPTL), 63–83 (VYAA…WLID), and 89–109 (QPSL…LYWP).

Belongs to the UPF0060 family.

It is found in the cell membrane. The sequence is that of UPF0060 membrane protein Haur_1798 from Herpetosiphon aurantiacus (strain ATCC 23779 / DSM 785 / 114-95).